A 458-amino-acid chain; its full sequence is Probable beta-eliminating lyase (458 aa).

K257 carries the N6-(pyridoxal phosphate)lysine modification.

The protein belongs to the beta-eliminating lyase family. The cofactor is pyridoxal 5'-phosphate.

In Trichomonas vaginalis (strain ATCC PRA-98 / G3), this protein is Probable beta-eliminating lyase.